The following is a 30-amino-acid chain: Chassatide C9 (30 aa).

The cyclopeptide (Gly-Asn) cross-link spans Gly1 to Asn30. Disulfide bonds link Cys4–Cys20, Cys8–Cys22, and Cys13–Cys27.

In terms of processing, this is a cyclic peptide.

Its function is as follows. Probably participates in a plant defense mechanism. In Chassalia chartacea (Chassalia curviflora), this protein is Chassatide C9.